Consider the following 164-residue polypeptide: Single-stranded DNA-binding protein 2 (164 aa).

The 105-residue stretch at isoleucine 5–glycine 109 folds into the SSB domain. The tract at residues methionine 105–phenylalanine 164 is disordered. The segment covering arginine 111 to glutamate 122 has biased composition (gly residues). Positions aspartate 159–phenylalanine 164 match the Important for interaction with partner proteins motif.

In terms of assembly, homotetramer.

In terms of biological role, plays an important role in DNA replication, recombination and repair. Binds to ssDNA and to an array of partner proteins to recruit them to their sites of action during DNA metabolism. The polypeptide is Single-stranded DNA-binding protein 2 (ssb2) (Xylella fastidiosa (strain 9a5c)).